The sequence spans 251 residues: Putative integrase/recombinase y4eF (251 aa).

The 40-residue stretch at 1-40 folds into the Core-binding (CB) domain; sequence MLGREDIRTYQVYLANEKKLAPGSIHIALSALRFFFNVTL. The Tyr recombinase domain maps to 58–231; sequence KLPIILSPDE…ATNKVCATES (174 aa). Active-site residues include arginine 93, lysine 118, histidine 183, arginine 186, and histidine 209. Tyrosine 218 acts as the O-(3'-phospho-DNA)-tyrosine intermediate in catalysis.

It belongs to the 'phage' integrase family.

In Sinorhizobium fredii (strain NBRC 101917 / NGR234), this protein is Putative integrase/recombinase y4eF.